We begin with the raw amino-acid sequence, 302 residues long: CFYEIVDDYLRLFHDKEGRIMYDQMSDMRNRYIDMDGRMTFGTVGGYAVQSRGDGGYYVKSRGDGGYPVQGRGDTGYSSQTRSDDACLGQGRGEVDTGMSYDASTGVCTDINRGDMSSDINSGLYSGGRMDDSCHTSESRRMDDPCGTDESRRLDVPCHSDDHYRSDNPCTDDSCQAEDRRGGHSDSHRIDISSEESASRRSRNHAFAEGRMSEMRLRYMETCRRVLPFMERTLEMQHGGDTFFCGDEMMLCDMMCYCALENPLMENASFFGQYPKLMALRERVASQINISQYIKRRYQSDF.

Tandem repeats lie at residues 45 to 54, 55 to 64, and 65 to 74. The tract at residues 45 to 84 is 4 X approximate tandem repeats of G-G-Y-[AYP]-V-[QK]-[SG]-R-G-D; that stretch reads GGYAVQSRGDGGYYVKSRGDGGYPVQGRGDTGYSSQTRSD. Short sequence motifs (cell attachment site) lie at residues 52–54, 62–64, and 72–74; these read RGD. Residues 68–92 are disordered; it reads PVQGRGDTGYSSQTRSDDACLGQGR. A 4; approximate repeat occupies 75–84; the sequence is TGYSSQTRSD. Positions 113–115 match the Cell attachment site motif; sequence RGD. The segment at 118 to 205 is disordered; it reads SDINSGLYSG…ESASRRSRNH (88 aa). 2 stretches are compositionally biased toward basic and acidic residues: residues 129 to 166 and 177 to 192; these read RMDD…HYRS and AEDR…RIDI. Residues 183–302 enclose the GST C-terminal domain; the sequence is GHSDSHRIDI…YIKRRYQSDF (120 aa).

This sequence belongs to the GST superfamily.

Its function is as follows. S-crystallins are structural components of squids and octopi eye lens. This chain is S-crystallin SL4, found in Nototodarus sloanii (Wellington flying squid).